An 858-amino-acid chain; its full sequence is Alanine--tRNA ligase (858 aa).

The Zn(2+) site is built by His-550, His-554, Cys-652, and His-656.

This sequence belongs to the class-II aminoacyl-tRNA synthetase family. Requires Zn(2+) as cofactor.

The protein localises to the cytoplasm. It catalyses the reaction tRNA(Ala) + L-alanine + ATP = L-alanyl-tRNA(Ala) + AMP + diphosphate. Its function is as follows. Catalyzes the attachment of alanine to tRNA(Ala) in a two-step reaction: alanine is first activated by ATP to form Ala-AMP and then transferred to the acceptor end of tRNA(Ala). Also edits incorrectly charged Ser-tRNA(Ala) and Gly-tRNA(Ala) via its editing domain. In Pseudothermotoga lettingae (strain ATCC BAA-301 / DSM 14385 / NBRC 107922 / TMO) (Thermotoga lettingae), this protein is Alanine--tRNA ligase.